The following is a 252-amino-acid chain: 3-dehydroquinate dehydratase (252 aa).

3-dehydroquinate is bound by residues Ser21, 46–48, and Arg82; that span reads EWR. The active-site Proton donor/acceptor is the His143. Lys170 serves as the catalytic Schiff-base intermediate with substrate. Positions 213, 232, and 236 each coordinate 3-dehydroquinate.

Belongs to the type-I 3-dehydroquinase family. As to quaternary structure, homodimer.

The catalysed reaction is 3-dehydroquinate = 3-dehydroshikimate + H2O. It functions in the pathway metabolic intermediate biosynthesis; chorismate biosynthesis; chorismate from D-erythrose 4-phosphate and phosphoenolpyruvate: step 3/7. Involved in the third step of the chorismate pathway, which leads to the biosynthesis of aromatic amino acids. Catalyzes the cis-dehydration of 3-dehydroquinate (DHQ) and introduces the first double bond of the aromatic ring to yield 3-dehydroshikimate. The sequence is that of 3-dehydroquinate dehydratase from Salmonella agona (strain SL483).